We begin with the raw amino-acid sequence, 516 residues long: Maturase K (516 aa).

It belongs to the intron maturase 2 family. MatK subfamily.

The protein localises to the plastid. Its subcellular location is the chloroplast. Functionally, usually encoded in the trnK tRNA gene intron. Probably assists in splicing its own and other chloroplast group II introns. This Chara vulgaris (Common stonewort) protein is Maturase K.